A 550-amino-acid chain; its full sequence is Hydroxylamine reductase (550 aa).

The [2Fe-2S] cluster site is built by Cys3, Cys6, Cys18, and Cys25. Residues His249, Glu273, Cys317, Cys405, Cys433, Cys458, Glu492, and Lys494 each coordinate hybrid [4Fe-2O-2S] cluster. Cys405 carries the post-translational modification Cysteine persulfide.

Belongs to the HCP family. It depends on [2Fe-2S] cluster as a cofactor. Hybrid [4Fe-2O-2S] cluster serves as cofactor.

It localises to the cytoplasm. It catalyses the reaction A + NH4(+) + H2O = hydroxylamine + AH2 + H(+). Catalyzes the reduction of hydroxylamine to form NH(3) and H(2)O. This Escherichia coli (strain SMS-3-5 / SECEC) protein is Hydroxylamine reductase.